A 350-amino-acid chain; its full sequence is Biotin synthase (350 aa).

The Radical SAM core domain occupies asparagine 38–glutamate 256. [4Fe-4S] cluster-binding residues include cysteine 53, cysteine 57, and cysteine 60. Positions 97, 128, 188, and 260 each coordinate [2Fe-2S] cluster.

The protein belongs to the radical SAM superfamily. Biotin synthase family. Homodimer. It depends on [4Fe-4S] cluster as a cofactor. [2Fe-2S] cluster serves as cofactor.

The enzyme catalyses (4R,5S)-dethiobiotin + (sulfur carrier)-SH + 2 reduced [2Fe-2S]-[ferredoxin] + 2 S-adenosyl-L-methionine = (sulfur carrier)-H + biotin + 2 5'-deoxyadenosine + 2 L-methionine + 2 oxidized [2Fe-2S]-[ferredoxin]. It functions in the pathway cofactor biosynthesis; biotin biosynthesis; biotin from 7,8-diaminononanoate: step 2/2. Functionally, catalyzes the conversion of dethiobiotin (DTB) to biotin by the insertion of a sulfur atom into dethiobiotin via a radical-based mechanism. The sequence is that of Biotin synthase from Aliivibrio fischeri (strain ATCC 700601 / ES114) (Vibrio fischeri).